The following is a 553-amino-acid chain: Hydroxylamine reductase (553 aa).

Cysteine 3, cysteine 6, cysteine 18, and cysteine 25 together coordinate [2Fe-2S] cluster. Residues histidine 252, glutamate 276, cysteine 320, cysteine 408, cysteine 436, cysteine 461, glutamate 495, and lysine 497 each contribute to the hybrid [4Fe-2O-2S] cluster site. Cysteine 408 carries the cysteine persulfide modification.

Belongs to the HCP family. Requires [2Fe-2S] cluster as cofactor. It depends on hybrid [4Fe-2O-2S] cluster as a cofactor.

It is found in the cytoplasm. The enzyme catalyses A + NH4(+) + H2O = hydroxylamine + AH2 + H(+). Catalyzes the reduction of hydroxylamine to form NH(3) and H(2)O. The protein is Hydroxylamine reductase of Photobacterium phosphoreum.